Consider the following 418-residue polypeptide: Putative competence-damage inducible protein (418 aa).

Belongs to the CinA family.

In Streptococcus pneumoniae (strain CGSP14), this protein is Putative competence-damage inducible protein.